The following is a 413-amino-acid chain: Gamma-glutamyl phosphate reductase (413 aa).

It belongs to the gamma-glutamyl phosphate reductase family.

The protein resides in the cytoplasm. The enzyme catalyses L-glutamate 5-semialdehyde + phosphate + NADP(+) = L-glutamyl 5-phosphate + NADPH + H(+). Its pathway is amino-acid biosynthesis; L-proline biosynthesis; L-glutamate 5-semialdehyde from L-glutamate: step 2/2. Catalyzes the NADPH-dependent reduction of L-glutamate 5-phosphate into L-glutamate 5-semialdehyde and phosphate. The product spontaneously undergoes cyclization to form 1-pyrroline-5-carboxylate. This is Gamma-glutamyl phosphate reductase from Geobacillus sp. (strain WCH70).